The following is a 751-amino-acid chain: Proton-associated sugar transporter A (751 aa).

The next 6 membrane-spanning stretches (helical) occupy residues 93-113 (ILFGIEFSYAMETAYVTPVLL), 123-143 (SLVWFISPILGFLLQPLLGAW), 155-175 (RPFILVLAIGALLGLSLLLNG), 191-211 (WGILLTVCGVVLMDFSADSAD), 233-253 (IHALMAGLGGGFGYVVGGIHW), and 268-288 (VIYVFTAITLSVTTVLTLISI). Residue threonine 500 is modified to Phosphothreonine. 6 helical membrane-spanning segments follow: residues 536-556 (GWLSFEGMLLFYTDFMGEVVF), 576-596 (VTMGCWGMCIYAFSAAFYSAI), 606-626 (VRTLYFIAYLAFGLGTGLATL), 630-650 (LYVVLSLCTTYGILFSTLCTL), 688-708 (FLAQILVSLVLGPLTSAVGSA), and 710-730 (GVMYFSSLVSFLGCLYSSLCV).

The protein belongs to the glycoside-pentoside-hexuronide (GPH) cation symporter transporter (TC 2.A.2) family.

It is found in the membrane. It carries out the reaction D-galactose(in) + H(+)(in) = D-galactose(out) + H(+)(out). It catalyses the reaction D-glucose(out) + H(+)(out) = D-glucose(in) + H(+)(in). In terms of biological role, proton-associated glucose transporter in the brain. The polypeptide is Proton-associated sugar transporter A (Mus musculus (Mouse)).